Here is a 78-residue protein sequence, read N- to C-terminus: MASLIQVRDLLALRGRMEAAQISQTLNTPQPMINAMLQQLESMGKAVRIQEEPDGCLSGNCKSCPEGKACLREWWALR.

Cys-56, Cys-61, Cys-64, and Cys-70 together coordinate iron-sulfur cluster.

The protein belongs to the FeoC family.

Functionally, may function as a transcriptional regulator that controls feoABC expression. This Escherichia coli O7:K1 (strain IAI39 / ExPEC) protein is Probable [Fe-S]-dependent transcriptional repressor.